The sequence spans 750 residues: Photosystem I P700 chlorophyll a apoprotein A1 (750 aa).

The next 8 helical transmembrane spans lie at Val-70–Ala-93, Leu-156–His-179, Leu-195–Leu-219, Ile-291–Tyr-309, Trp-346–Tyr-369, Leu-385–Val-411, Ala-433–His-455, and Phe-531–Leu-549. Residues Cys-573 and Cys-582 each contribute to the [4Fe-4S] cluster site. 2 helical membrane passes run His-589 to Trp-610 and Leu-664 to Phe-686. His-675 contacts chlorophyll a'. 2 residues coordinate chlorophyll a: Met-683 and Tyr-691. Trp-692 serves as a coordination point for phylloquinone. Residues Ala-724 to Ala-744 traverse the membrane as a helical segment.

The protein belongs to the PsaA/PsaB family. In terms of assembly, the PsaA/B heterodimer binds the P700 chlorophyll special pair and subsequent electron acceptors. PSI consists of a core antenna complex that captures photons, and an electron transfer chain that converts photonic excitation into a charge separation. The eukaryotic PSI reaction center is composed of at least 11 subunits. It depends on P700 is a chlorophyll a/chlorophyll a' dimer, A0 is one or more chlorophyll a, A1 is one or both phylloquinones and FX is a shared 4Fe-4S iron-sulfur center. as a cofactor.

The protein localises to the plastid. It is found in the chloroplast thylakoid membrane. It carries out the reaction reduced [plastocyanin] + hnu + oxidized [2Fe-2S]-[ferredoxin] = oxidized [plastocyanin] + reduced [2Fe-2S]-[ferredoxin]. Functionally, psaA and PsaB bind P700, the primary electron donor of photosystem I (PSI), as well as the electron acceptors A0, A1 and FX. PSI is a plastocyanin-ferredoxin oxidoreductase, converting photonic excitation into a charge separation, which transfers an electron from the donor P700 chlorophyll pair to the spectroscopically characterized acceptors A0, A1, FX, FA and FB in turn. Oxidized P700 is reduced on the lumenal side of the thylakoid membrane by plastocyanin. This chain is Photosystem I P700 chlorophyll a apoprotein A1, found in Vitis vinifera (Grape).